A 177-amino-acid chain; its full sequence is ATP synthase subunit delta (177 aa).

Belongs to the ATPase delta chain family. As to quaternary structure, F-type ATPases have 2 components, F(1) - the catalytic core - and F(0) - the membrane proton channel. F(1) has five subunits: alpha(3), beta(3), gamma(1), delta(1), epsilon(1). F(0) has three main subunits: a(1), b(2) and c(10-14). The alpha and beta chains form an alternating ring which encloses part of the gamma chain. F(1) is attached to F(0) by a central stalk formed by the gamma and epsilon chains, while a peripheral stalk is formed by the delta and b chains.

It localises to the cell inner membrane. Functionally, f(1)F(0) ATP synthase produces ATP from ADP in the presence of a proton or sodium gradient. F-type ATPases consist of two structural domains, F(1) containing the extramembraneous catalytic core and F(0) containing the membrane proton channel, linked together by a central stalk and a peripheral stalk. During catalysis, ATP synthesis in the catalytic domain of F(1) is coupled via a rotary mechanism of the central stalk subunits to proton translocation. In terms of biological role, this protein is part of the stalk that links CF(0) to CF(1). It either transmits conformational changes from CF(0) to CF(1) or is implicated in proton conduction. The polypeptide is ATP synthase subunit delta (Shewanella sediminis (strain HAW-EB3)).